Consider the following 154-residue polypeptide: Ubiquitin-like protein 4A-A (154 aa).

The 76-residue stretch at 1 to 76 (MILTVKPLQG…LNLVVRPAGE (76 aa)) folds into the Ubiquitin-like domain.

Component of the BAT3 complex.

Its subcellular location is the cytoplasm. It localises to the cytosol. Its function is as follows. Component of the BAT3 complex, a multiprotein complex involved in the post-translational delivery of tail-anchored (TA) membrane proteins to the endoplasmic reticulum membrane. TA membrane proteins, also named type II transmembrane proteins, contain a single C-terminal transmembrane region. In Salmo salar (Atlantic salmon), this protein is Ubiquitin-like protein 4A-A (ubl4aa).